Consider the following 211-residue polypeptide: Urease accessory protein UreG (211 aa).

GTP is bound at residue 16–23 (GPVGSGKT).

This sequence belongs to the SIMIBI class G3E GTPase family. UreG subfamily. Homodimer. UreD, UreF and UreG form a complex that acts as a GTP-hydrolysis-dependent molecular chaperone, activating the urease apoprotein by helping to assemble the nickel containing metallocenter of UreC. The UreE protein probably delivers the nickel.

The protein localises to the cytoplasm. Functionally, facilitates the functional incorporation of the urease nickel metallocenter. This process requires GTP hydrolysis, probably effectuated by UreG. The chain is Urease accessory protein UreG from Janthinobacterium sp. (strain Marseille) (Minibacterium massiliensis).